Here is a 599-residue protein sequence, read N- to C-terminus: Serine/threonine-protein kinase haspin homolog (599 aa).

Residues 287-599 enclose the Protein kinase domain; that stretch reads PESIVKIGEG…FSDMLMDQIS (313 aa). Residues 293–301, Lys-310, 407–412, 448–453, and 486–488 each bind ATP; these read IGEGTYGEA, EHGGKD, DLHWGN, and DFT. Asp-448 (proton acceptor) is an active-site residue.

This sequence belongs to the protein kinase superfamily. Ser/Thr protein kinase family. Haspin subfamily. As to expression, expressed in meristems and primordia of root tips, lateral roots, shoot apex, leaves and flowers.

It localises to the cytoplasm. It is found in the perinuclear region. The protein resides in the nucleus. The protein localises to the chromosome. Its subcellular location is the cytoskeleton. It localises to the phragmoplast. The catalysed reaction is L-seryl-[protein] + ATP = O-phospho-L-seryl-[protein] + ADP + H(+). It carries out the reaction L-threonyl-[protein] + ATP = O-phospho-L-threonyl-[protein] + ADP + H(+). Functionally, threonine-protein kinase that phosphorylates histone H3 in vitro at 'Thr-3' (H3T3ph) and 'Thr-11' (H3T11ph), but not at 'Ser-10' (H3S10ph) or 'Ser-28' (H3S28ph). Plays a role in mitotic cell division during plant growth. Threonine-protein kinase that phosphorylates histone H3 in vitro at 'Thr-3' (H3T3ph), but not at 'Thr-11' (H3T11ph), 'Ser-10' (H3S10ph) or 'Ser-28' (H3S28ph). Involved in histone H3 phosphorylation in mitotic cells. Contributes to organ and plant development, as well as embryonic patterning. The sequence is that of Serine/threonine-protein kinase haspin homolog from Arabidopsis thaliana (Mouse-ear cress).